The primary structure comprises 80 residues: uncharacterized protein (80 aa).

Residues 12-32 (FKIIALILLIVLIINLSYKLF) traverse the membrane as a helical segment.

Its subcellular location is the membrane. This is an uncharacterized protein from Saccharomyces cerevisiae (strain ATCC 204508 / S288c) (Baker's yeast).